The following is a 277-amino-acid chain: MSKFRLAVVQLHVSKIKADNLGRAQTLVKEAAGQGAKVVVLPECFNSPYGTGFFKEYAEKIPGESTQVLSETAKKCGIYLVGGSIPEEDGGKLYNTCSVFGPDGTLLVTHRKIHLFDIDVPGKIRFQESETLSPGKSLSMFETPYCKVGVGICYDIRFAELAQIYAKKGCQLLVYPGAFNMTTGPAHWELLQRGRAVDNQVYVATASPARDETASYVAWGHSSVINPWGEVISKAGSEESVVYADIDLQYLADVRQQIPITKQRRNDLYSVNSVQEG.

The CN hydrolase domain maps to 4-248 (FRLAVVQLHV…ESVVYADIDL (245 aa)). Glu-43 serves as the catalytic Proton acceptor. Lys-112 functions as the Proton donor in the catalytic mechanism. Cys-153 functions as the Nucleophile in the catalytic mechanism.

This sequence belongs to the carbon-nitrogen hydrolase superfamily. NIT1/NIT2 family. In terms of assembly, homodimer.

It is found in the cytoplasm. The catalysed reaction is 2-oxoglutaramate + H2O = 2-oxoglutarate + NH4(+). It carries out the reaction 2-oxosuccinamate + H2O = oxaloacetate + NH4(+). Its function is as follows. Has omega-amidase activity. The role of omega-amidase is to remove potentially toxic intermediates by converting 2-oxoglutaramate and 2-oxosuccinamate to biologically useful 2-oxoglutarate and oxaloacetate, respectively. The polypeptide is Omega-amidase NIT2 (nit2) (Danio rerio (Zebrafish)).